Consider the following 211-residue polypeptide: N-(5'-phosphoribosyl)anthranilate isomerase (211 aa).

This sequence belongs to the TrpF family.

The catalysed reaction is N-(5-phospho-beta-D-ribosyl)anthranilate = 1-(2-carboxyphenylamino)-1-deoxy-D-ribulose 5-phosphate. The protein operates within amino-acid biosynthesis; L-tryptophan biosynthesis; L-tryptophan from chorismate: step 3/5. This is N-(5'-phosphoribosyl)anthranilate isomerase from Nitrosomonas europaea (strain ATCC 19718 / CIP 103999 / KCTC 2705 / NBRC 14298).